The chain runs to 294 residues: 4-hydroxy-tetrahydrodipicolinate synthase (294 aa).

Threonine 48 contacts pyruvate. The Proton donor/acceptor role is filled by tyrosine 136. Residue lysine 164 is the Schiff-base intermediate with substrate of the active site. Valine 206 lines the pyruvate pocket.

It belongs to the DapA family. As to quaternary structure, homotetramer; dimer of dimers.

It is found in the cytoplasm. The catalysed reaction is L-aspartate 4-semialdehyde + pyruvate = (2S,4S)-4-hydroxy-2,3,4,5-tetrahydrodipicolinate + H2O + H(+). It participates in amino-acid biosynthesis; L-lysine biosynthesis via DAP pathway; (S)-tetrahydrodipicolinate from L-aspartate: step 3/4. Functionally, catalyzes the condensation of (S)-aspartate-beta-semialdehyde [(S)-ASA] and pyruvate to 4-hydroxy-tetrahydrodipicolinate (HTPA). This chain is 4-hydroxy-tetrahydrodipicolinate synthase, found in Desulforudis audaxviator (strain MP104C).